The chain runs to 183 residues: 2-C-methyl-D-erythritol 2,4-cyclodiphosphate synthase (183 aa).

2 residues coordinate a divalent metal cation: Asp8 and His10. Residues 8–10 (DVH) and 34–35 (HS) each bind 4-CDP-2-C-methyl-D-erythritol 2-phosphate. His42 contacts a divalent metal cation. 4-CDP-2-C-methyl-D-erythritol 2-phosphate-binding positions include 56-58 (DIG), 61-65 (FPDTD), 132-135 (TTEE), and Phe139.

This sequence belongs to the IspF family. Homotrimer. Requires a divalent metal cation as cofactor.

The catalysed reaction is 4-CDP-2-C-methyl-D-erythritol 2-phosphate = 2-C-methyl-D-erythritol 2,4-cyclic diphosphate + CMP. The protein operates within isoprenoid biosynthesis; isopentenyl diphosphate biosynthesis via DXP pathway; isopentenyl diphosphate from 1-deoxy-D-xylulose 5-phosphate: step 4/6. Functionally, involved in the biosynthesis of isopentenyl diphosphate (IPP) and dimethylallyl diphosphate (DMAPP), two major building blocks of isoprenoid compounds. Catalyzes the conversion of 4-diphosphocytidyl-2-C-methyl-D-erythritol 2-phosphate (CDP-ME2P) to 2-C-methyl-D-erythritol 2,4-cyclodiphosphate (ME-CPP) with a corresponding release of cytidine 5-monophosphate (CMP). This is 2-C-methyl-D-erythritol 2,4-cyclodiphosphate synthase from Lachnospira eligens (strain ATCC 27750 / DSM 3376 / VPI C15-48 / C15-B4) (Eubacterium eligens).